The sequence spans 443 residues: Zinc finger CCCH domain-containing protein 63 (443 aa).

2 disordered regions span residues 1–29 (MDFD…MAPT) and 56–99 (LPGP…SSSW). C3H1-type zinc fingers lie at residues 30–56 (DTRQ…HREL) and 109–136 (TKTE…HCWS). WD repeat units lie at residues 149 to 190 (GHEK…GVLK), 228 to 265 (GPVG…NCFE), 272 to 311 (GHTL…QTLT), 313 to 349 (HSSV…NLEV), 354 to 396 (KEEH…LFIR), and 404 to 442 (FAKQ…TAAL).

The protein is Zinc finger CCCH domain-containing protein 63 (ZFWD2) of Arabidopsis thaliana (Mouse-ear cress).